The following is a 412-amino-acid chain: Putative competence-damage inducible protein (412 aa).

It belongs to the CinA family.

The protein is Putative competence-damage inducible protein of Caldanaerobacter subterraneus subsp. tengcongensis (strain DSM 15242 / JCM 11007 / NBRC 100824 / MB4) (Thermoanaerobacter tengcongensis).